Consider the following 37-residue polypeptide: Large ribosomal subunit protein bL36 (37 aa).

It belongs to the bacterial ribosomal protein bL36 family.

This is Large ribosomal subunit protein bL36 from Alkaliphilus oremlandii (strain OhILAs) (Clostridium oremlandii (strain OhILAs)).